Reading from the N-terminus, the 364-residue chain is Paraneoplastic antigen Ma2 homolog (364 aa).

Ala2 carries the N-acetylalanine modification. Acidic residues predominate over residues 335–351; it reads EEEEATFENENTEEPEG. The tract at residues 335 to 364 is disordered; the sequence is EEEEATFENENTEEPEGGDGYGHWGNEAND.

It belongs to the PNMA family.

Its subcellular location is the nucleus. The protein localises to the nucleolus. In Bos taurus (Bovine), this protein is Paraneoplastic antigen Ma2 homolog (PNMA2).